We begin with the raw amino-acid sequence, 343 residues long: MSAFTPASEVLLRHSDDFEQSRILFAGDLQDDLPARLDTAASRAHTQQFHHWQVLSRQMGDNARFSLVATVDDVADCDTLIYYWPKNKPEAQFQLMNLLSLLPVGTDIFVVGENRSGVRSAEQMLADYAPLNKVDSARRCGLYFGRLEKQPVFDADKFWGEYSVDGLTVKTLPGVFSRDGLDVGSQLLLSTLTPHTKGKVLDVGCGAGVLSVAFARHSPKIRLTLCDVSAPAVEASRATLAANCVEGEVFASNVFSEVKGRFDMIISNPPFHDGMQTSLDAAQTLIRGAVRHLNSGGELRIVANAFLPYPDVLDETFGFHEVIAQTGRFKVYRAIMTRQAKKG.

The protein belongs to the methyltransferase superfamily. RsmC family. Monomer.

The protein resides in the cytoplasm. The catalysed reaction is guanosine(1207) in 16S rRNA + S-adenosyl-L-methionine = N(2)-methylguanosine(1207) in 16S rRNA + S-adenosyl-L-homocysteine + H(+). In terms of biological role, specifically methylates the guanine in position 1207 of 16S rRNA in the 30S particle. The polypeptide is Ribosomal RNA small subunit methyltransferase C (Shigella sonnei (strain Ss046)).